A 353-amino-acid polypeptide reads, in one-letter code: Vomeronasal type-1 receptor 1 (353 aa).

The Extracellular portion of the chain corresponds to 1 to 56 (MVGDTLKLLSPLMTRYFFLLFYSTDSSDLNENQHPLDFDEMAFGKVKSGISFLIQT). A helical transmembrane segment spans residues 57 to 77 (GVGILGNSFLLCFYNLILFTG). The Cytoplasmic segment spans residues 78–84 (HKLRPTD). Residues 85-105 (LILSHLALANSMVLFFKGIPQ) form a helical membrane-spanning segment. Residues 106-132 (TMAAFGLKYLLNDTGCKFVFYYHRVGT) are Extracellular-facing. Residue N117 is glycosylated (N-linked (GlcNAc...) asparagine). Residues 133–153 (RVSLSTICLLNGFQAIKLNPS) form a helical membrane-spanning segment. The Cytoplasmic segment spans residues 154 to 169 (ICRWMEIKIRSPRFID). A helical transmembrane segment spans residues 170–190 (FCCLLCWVPHVLMNASVLLLV). Topologically, residues 191–226 (NGPLNSKNSSAKNNYGYCSYKASKRFSSLHAVLYFS) are extracellular. N198 carries an N-linked (GlcNAc...) asparagine glycan. Residues 227 to 247 (PDFMSLGFMVWASGSMVFFLY) traverse the membrane as a helical segment. At 248-274 (RHKQQVQHNHSNRLSCRPSQETRATRT) the chain is on the cytoplasmic side. Residues 275 to 295 (IMVLVSSFFVFYSVHSFLTIW) form a helical membrane-spanning segment. The Extracellular portion of the chain corresponds to 296 to 303 (TTVVANPG). Residues 304-324 (QWIVNNSVLVASYFPSRSPFV) form a helical membrane-spanning segment. The Cytoplasmic portion of the chain corresponds to 325-353 (LIMSDTRISQFCFACRTRKTLFPNLVVMP).

The protein belongs to the G-protein coupled receptor 1 family.

The protein localises to the cell membrane. Functionally, putative pheromone receptor. In Gorilla gorilla gorilla (Western lowland gorilla), this protein is Vomeronasal type-1 receptor 1 (VN1R1).